The chain runs to 139 residues: Small ribosomal subunit protein uS12 (139 aa).

Position 102 is a 3-methylthioaspartic acid (D102).

It belongs to the universal ribosomal protein uS12 family. As to quaternary structure, part of the 30S ribosomal subunit. Contacts proteins S8 and S17. May interact with IF1 in the 30S initiation complex.

Its function is as follows. With S4 and S5 plays an important role in translational accuracy. Interacts with and stabilizes bases of the 16S rRNA that are involved in tRNA selection in the A site and with the mRNA backbone. Located at the interface of the 30S and 50S subunits, it traverses the body of the 30S subunit contacting proteins on the other side and probably holding the rRNA structure together. The combined cluster of proteins S8, S12 and S17 appears to hold together the shoulder and platform of the 30S subunit. This is Small ribosomal subunit protein uS12 from Mycoplasma capricolum subsp. capricolum (strain California kid / ATCC 27343 / NCTC 10154).